The chain runs to 122 residues: uncharacterized protein (122 aa).

The first 17 residues, 1–17 (MKYSSIFSMLSFFILFA), serve as a signal peptide directing secretion.

This is an uncharacterized protein from Escherichia coli (strain K12).